An 859-amino-acid chain; its full sequence is Ubiquitin carboxyl-terminal hydrolase 23 (859 aa).

A compositionally biased stretch (polar residues) spans Met1–Gly24. Residues Met1–Cys26 form a disordered region. Residues Ala107–Asp410 form the USP domain. Cys116 acts as the Nucleophile in catalysis. Catalysis depends on His369, which acts as the Proton acceptor. 2 disordered regions span residues Met722–Asn749 and Glu822–Ile859.

Belongs to the peptidase C19 family.

It catalyses the reaction Thiol-dependent hydrolysis of ester, thioester, amide, peptide and isopeptide bonds formed by the C-terminal Gly of ubiquitin (a 76-residue protein attached to proteins as an intracellular targeting signal).. Its function is as follows. Recognizes and hydrolyzes the peptide bond at the C-terminal Gly of ubiquitin. Involved in the processing of poly-ubiquitin precursors as well as that of ubiquitinated proteins. This is Ubiquitin carboxyl-terminal hydrolase 23 (UBP23) from Arabidopsis thaliana (Mouse-ear cress).